Consider the following 351-residue polypeptide: N6-Methyl-AMP deaminase (351 aa).

His23 and His25 together coordinate Zn(2+). N(6)-methyl-AMP is bound by residues His25, Asn27, His73, 105-108 (STPR), Asp147, and Gly180. A Zn(2+)-binding site is contributed by His207. N(6)-methyl-AMP is bound by residues Glu210, Asp292, and Asp293. Catalysis depends on Glu210, which acts as the Proton donor. Asp292 provides a ligand contact to Zn(2+).

This sequence belongs to the metallo-dependent hydrolases superfamily. Adenosine and AMP deaminases family. Monomer. Zn(2+) is required as a cofactor.

The catalysed reaction is N(6)-methyl-AMP + H2O + H(+) = IMP + methylamine. Its function is as follows. Catalyzes the hydrolysis of the free cytosolic methylated adenosine nucleotide N(6)-methyl-AMP (N6-mAMP) to produce inositol monophosphate (IMP) and methylamine. Is required for the catabolism of cytosolic N6-mAMP, which is derived from the degradation of mRNA containing N6-methylated adenine (m6A). This chain is N6-Methyl-AMP deaminase, found in Bos taurus (Bovine).